A 357-amino-acid polypeptide reads, in one-letter code: Elongation factor Ts (357 aa).

The tract at residues 82 to 85 is involved in Mg(2+) ion dislocation from EF-Tu; that stretch reads TDFV.

Belongs to the EF-Ts family.

The protein resides in the cytoplasm. Functionally, associates with the EF-Tu.GDP complex and induces the exchange of GDP to GTP. It remains bound to the aminoacyl-tRNA.EF-Tu.GTP complex up to the GTP hydrolysis stage on the ribosome. This is Elongation factor Ts from Campylobacter jejuni (strain RM1221).